A 587-amino-acid polypeptide reads, in one-letter code: DELLA protein RGA (587 aa).

Residues 1 to 26 (MKRDHHQFQGRLSNHGTSSSSSSISK) form a disordered region. The DELLA motif motif lies at 44–48 (DELLA). The short motif at 66–70 (LEQLE) is the LEXLE motif element. The short motif at 89 to 93 (VHYNP) is the VHYNP motif element. The segment at 152 to 181 (IDSSSSSNNQNKRLKSCSSPDSMVTSTSTG) is disordered. A compositionally biased stretch (polar residues) spans 153 to 175 (DSSSSSNNQNKRLKSCSSPDSMV). The GRAS domain occupies 212–581 (VDSQENGVRL…RPLITTSAWK (370 aa)). Positions 219–273 (VRLVHALMACAEAIQQNNLTLAEALVKQIGCLAVSQAGAMRKVATYFAEALARRI) are leucine repeat I (LRI). Positions 292 to 357 (QMHFYETCPY…GGPPTFRLTG (66 aa)) are VHIID. The VHIID motif lies at 323 to 327 (VHVID). Positions 371 to 403 (EVGCKLAQLAEAIHVEFEYRGFVANSLADLDAS) are leucine repeat II (LRII). Residues 415–502 (VAVNSVFELH…EVYLGKQICN (88 aa)) form a PFYRE region. The short motif at 423-427 (LHKLL) is the LXXLL motif element. An SAW region spans residues 505–581 (ACEGPDRVER…RPLITTSAWK (77 aa)).

This sequence belongs to the GRAS family. DELLA subfamily. In terms of assembly, interacts directly with the GID2/SLY1 component of the SCF(GID2) complex. Interacts (via N-terminus) with GID1A, GID1B and GID1B (via N-terminus). Binds to bHLH transcription factors such as MYC2, PIF1, PIF4, PIF6 and SPT. Interacts with the BOI proteins BOI, BRG1, BRG2 and BRG3. Interacts with NFYC9. Interacts with TOPP4. Interacts with FLZ5. Binds to zinc finger proteins MGP/IDD3, IDD4, IDD5, BIB/IDD9 and JKD/IDD10 in the nucleus. Binds to and coactivates GAF1/IDD2 and ENY/IDD1. Binds to PDF2 and ATML1. Post-translationally, phosphorylated. Phosphorylation may increase the interaction with GID2. In terms of processing, gibberellin (GA) induces dephosphorylation of RGA by TOPP4 and subsequent degradation by the proteasomal pathway. Ubiquitinated. Upon GA application it is ubiquitinated by the SCF(GID2) complex, leading to its subsequent degradation. Post-translationally, O-fucosylated by SPY. O-fucosylation enhances RGA activity by promoting RGA binding to key transcription factors in brassinosteroid and light signaling pathways. As to expression, ubiquitously expressed. Expressed in roots, rosette leaves, bolting and mature stems, young and mature siliques, flower buds and influorescences.

It is found in the nucleus. Probable transcriptional regulator that acts as a repressor of the gibberellin (GA) signaling pathway. Probably acts by participating in large multiprotein complexes that repress transcription of GA-inducible genes. Positively regulates XERICO expression in seeds. Upon GA application, it is degraded by the proteasome, allowing the GA signaling pathway. Compared to other DELLA proteins, it is the most sensitive to GA application. No effect of the BOI proteins on its stability. Its activity is probably regulated by other phytohormones such as auxin and ethylene, attenuation of auxin transport delaying its GA-induced degradation. Involved in the regulation of seed dormancy and germination, including glucose-induced delay of seed germination. The polypeptide is DELLA protein RGA (Arabidopsis thaliana (Mouse-ear cress)).